A 151-amino-acid chain; its full sequence is Cytochrome c-type biogenesis protein CcmE (151 aa).

Residues M1–R8 lie on the Cytoplasmic side of the membrane. Residues L9 to A29 traverse the membrane as a helical; Signal-anchor for type II membrane protein segment. Over L30–P151 the chain is Periplasmic. The heme site is built by H124 and Y128.

Belongs to the CcmE/CycJ family.

It localises to the cell inner membrane. Heme chaperone required for the biogenesis of c-type cytochromes. Transiently binds heme delivered by CcmC and transfers the heme to apo-cytochromes in a process facilitated by CcmF and CcmH. The protein is Cytochrome c-type biogenesis protein CcmE of Pseudomonas putida (strain ATCC 700007 / DSM 6899 / JCM 31910 / BCRC 17059 / LMG 24140 / F1).